A 341-amino-acid polypeptide reads, in one-letter code: Dihydroorotate dehydrogenase (quinone) (341 aa).

Residues 62 to 66 (AGMDK) and threonine 86 each bind FMN. Residue lysine 66 coordinates substrate. Position 111–115 (111–115 (NRMGF)) interacts with substrate. Positions 139 and 172 each coordinate FMN. Asparagine 172 serves as a coordination point for substrate. Serine 175 serves as the catalytic Nucleophile. Substrate is bound at residue asparagine 177. Residues lysine 217 and threonine 245 each coordinate FMN. A substrate-binding site is contributed by 246–247 (NT). FMN-binding positions include glycine 268, glycine 297, and 318–319 (YS).

Belongs to the dihydroorotate dehydrogenase family. Type 2 subfamily. Monomer. It depends on FMN as a cofactor.

The protein resides in the cell membrane. The catalysed reaction is (S)-dihydroorotate + a quinone = orotate + a quinol. Its pathway is pyrimidine metabolism; UMP biosynthesis via de novo pathway; orotate from (S)-dihydroorotate (quinone route): step 1/1. In terms of biological role, catalyzes the conversion of dihydroorotate to orotate with quinone as electron acceptor. This Shewanella loihica (strain ATCC BAA-1088 / PV-4) protein is Dihydroorotate dehydrogenase (quinone).